Here is a 145-residue protein sequence, read N- to C-terminus: D-aminoacyl-tRNA deacylase (145 aa).

The Gly-cisPro motif, important for rejection of L-amino acids motif lies at 137–138; the sequence is GP.

This sequence belongs to the DTD family. In terms of assembly, homodimer.

Its subcellular location is the cytoplasm. The enzyme catalyses glycyl-tRNA(Ala) + H2O = tRNA(Ala) + glycine + H(+). It catalyses the reaction a D-aminoacyl-tRNA + H2O = a tRNA + a D-alpha-amino acid + H(+). In terms of biological role, an aminoacyl-tRNA editing enzyme that deacylates mischarged D-aminoacyl-tRNAs. Also deacylates mischarged glycyl-tRNA(Ala), protecting cells against glycine mischarging by AlaRS. Acts via tRNA-based rather than protein-based catalysis; rejects L-amino acids rather than detecting D-amino acids in the active site. By recycling D-aminoacyl-tRNA to D-amino acids and free tRNA molecules, this enzyme counteracts the toxicity associated with the formation of D-aminoacyl-tRNA entities in vivo and helps enforce protein L-homochirality. This is D-aminoacyl-tRNA deacylase from Cereibacter sphaeroides (strain ATCC 17029 / ATH 2.4.9) (Rhodobacter sphaeroides).